The chain runs to 352 residues: MGRHSCCFKQKLRKGLWSPEEDEKLLNYITRHGHGCWSSVPKLAGLQRCGKSCRLRWINYLRPDLKRGAFSQDEESLIIELHAALGNRWSQIATRLPGRTDNEIKNFWNSCLKKKLRRKGIDPTTHKPLITNELQSLNVIDQKLTSSEVVKSTGSINNLHDQSMVVSSQQGPWWFPANTTTTNQNSAFCFSSSNTTTVSDQIVSLISSMSTSSSPTPMTSNFSPAPNNWEQLNYCNTVPSQSNSIYSAFFGNQYTEASQTMNNNNPLVDQHHHHQDMKSWASEILHYTEHNQSSETVIEAEVKPDIANYYWRSASSSSSPNQEAATLLHDANVEVYGKNLQKLNNMVFDQSL.

HTH myb-type domains follow at residues 9-61 (KQKL…INYL) and 62-116 (RPDL…KKKL). DNA-binding regions (H-T-H motif) lie at residues 37 to 61 (WSSV…INYL) and 89 to 112 (WSQI…NSCL).

Expressed in stems, flowers and seeds. Weakly expressed in leaves and roots.

It localises to the nucleus. Functionally, probable transcription factor. This is Transcription factor MYB86 (MYB86) from Arabidopsis thaliana (Mouse-ear cress).